Here is a 752-residue protein sequence, read N- to C-terminus: Reticulon-1-B (752 aa).

Disordered regions lie at residues 1–57 (MAAN…TSTD), 264–319 (EYPG…SEKQ), 334–424 (KAKE…SPSI), and 444–465 (ESCDGSSASEESPKRDPDSPMM). The span at 264 to 273 (EYPGNQQGKS) shows a compositional bias: polar residues. The span at 334–361 (KAKEGTKRFSSETNDEKQSRSFHAEKQD) shows a compositional bias: basic and acidic residues. Over residues 363–383 (TVMSTEATSASHYTKASSAES) the composition is skewed to polar residues. A Reticulon domain is found at 566–752 (AIDLLYWRDV…AKIPGTKQKE (187 aa)). 2 helical membrane passes run 580-600 (IVFGSILLMLFSLTLFSVVSV) and 684-704 (VLMWLLTYVGALFNGLTLLIM).

Isoform A and isoform C are both expressed in the animal hemisphere (presumptive neural ectoderm) of blastula and gastrula stage embryos, and along the anterior neural border, in the panplacodal primordium, and in the dorsolateral side of archenteron roof of late neurula embryos. At the tailbud stage, expression of the isoforms begin to differ. Isoform A localizes to the cranial placodes including the trigeminal placode, lateral line placode, olfactory placode and otic vesicle. Isoform C localizes to the central nervous system, including the spinal cord, prosencephalon, mesencephalon and rhombencephalon, as well as the lateral line placode, otic vesicle and pronephros.

It is found in the endoplasmic reticulum membrane. The protein resides in the nucleus. Its function is as follows. Inhibits amyloid precursor protein processing, probably by blocking BACE1 activity. This Xenopus laevis (African clawed frog) protein is Reticulon-1-B (rtn1-b).